The sequence spans 469 residues: ATP-dependent protease ATPase subunit HslU (469 aa).

Residues isoleucine 24 and 66–71 (GVGKTE) contribute to the ATP site. Residues 159-179 (LFGSMNQPDEPAEEEVDQELK) form a disordered region. Residues aspartate 282, glutamate 347, and arginine 419 each contribute to the ATP site.

The protein belongs to the ClpX chaperone family. HslU subfamily. A double ring-shaped homohexamer of HslV is capped on each side by a ring-shaped HslU homohexamer. The assembly of the HslU/HslV complex is dependent on binding of ATP.

It localises to the cytoplasm. ATPase subunit of a proteasome-like degradation complex; this subunit has chaperone activity. The binding of ATP and its subsequent hydrolysis by HslU are essential for unfolding of protein substrates subsequently hydrolyzed by HslV. HslU recognizes the N-terminal part of its protein substrates and unfolds these before they are guided to HslV for hydrolysis. This Listeria innocua serovar 6a (strain ATCC BAA-680 / CLIP 11262) protein is ATP-dependent protease ATPase subunit HslU.